The following is a 468-amino-acid chain: Membrane-associated tyrosine- and threonine-specific cdc2-inhibitory kinase wee-1.1 (468 aa).

Over residues 25–42 (SKDEPNKLNTSRKLEVTT) the composition is skewed to basic and acidic residues. Residues 25–63 (SKDEPNKLNTSRKLEVTTKKNQSNNKKRPPPINKARKSL) form a disordered region. Basic residues predominate over residues 49–61 (NKKRPPPINKARK). Residues 106 to 357 (FNFDKNLGKG…SELMKNHVVK (252 aa)) enclose the Protein kinase domain. Residues 112–120 (LGKGSFGEV) and Lys135 contribute to the ATP site. The Proton acceptor role is filled by Asp224. Mg(2+)-binding residues include Asn229 and Asp242. The segment at 425-453 (EDEYEVFSPPRTPVKKSRYQQTMPEVSPP) is disordered.

The protein belongs to the protein kinase superfamily. Ser/Thr protein kinase family. WEE1 subfamily. In the 12-13-cell embryo, expressed in the E blastomere. In the 16-cell embryo, expressed in the eight AB cells.

It is found in the nucleus. It carries out the reaction L-seryl-[protein] + ATP = O-phospho-L-seryl-[protein] + ADP + H(+). It catalyses the reaction L-threonyl-[protein] + ATP = O-phospho-L-threonyl-[protein] + ADP + H(+). Its function is as follows. Acts as a negative regulator of entry into mitosis (G2 to M transition) by phosphorylation of the CDK1 kinase. The sequence is that of Membrane-associated tyrosine- and threonine-specific cdc2-inhibitory kinase wee-1.1 (wee-1.1) from Caenorhabditis elegans.